An 885-amino-acid chain; its full sequence is Ankyrin repeat and SAM domain-containing protein 6 (885 aa).

ANK repeat units lie at residues 8 to 37 (PGLQLLLRACEQGDTDTARRLLEPGGEPVA), 68 to 97 (AGNSALQLAAAGGHEPLVRFLLRRGASVNS), 101 to 130 (YGWSALMQAARCGHASVAHLLLDHGADVNA), 134 to 163 (LGASVLTVASRGGHLGVVKLLLEAGATVDH), 181 to 210 (LGITALMAAVQHGHEAVVRLLMEWGADPNH), 215 to 244 (VGWSPLMLAALLGKLSVVQQLVEKGANPDH), 282 to 312 (KRRPDIFHALKMGNFQLVKEIADEDPNHVNL), 316 to 345 (DGATPLMLAAVTGQLPLVQLLVEKHADMNK), 350 to 379 (HGWTALMQATYHGNKEIVKYLLNQGADVTL), and 383 to 414 (NGYTAFDLVMLLNDPDTELVRLLASVCMQVNK). Asparagine 129 is subject to 3-hydroxyasparagine. 4 disordered regions span residues 415-439 (DRGGRPSHRPPLPHSKARQPWSIPM), 491-522 (MRAPPQDRTNHLGPPEAAHAAKDSGPGNPRRE), 563-775 (SSDR…ITDE), and 855-885 (FESSASNTRAPGNSPCMAGWVRPEETVSSRR). Low complexity predominate over residues 608-640 (PSISRSPTSPASSGNFNHSPHSSGGASGVGSMS). Serine 650 bears the Phosphoserine mark. Positions 650–662 (SGGSVDSVLSQIA) are enriched in polar residues. Low complexity-rich tracts occupy residues 689–713 (GSSPPELPASLLGSGSGSSNVTSSS) and 722–739 (PPSGTSATSKSTSPTLTP). Serine 734 and serine 742 each carry phosphoserine. Residues 750–770 (SSVSSSSSHRQSKSSGGSSSG) are compositionally biased toward low complexity. Positions 773 to 836 (TDEDELTGIL…LAAISELNAG (64 aa)) constitute an SAM domain. The segment covering 855–865 (FESSASNTRAP) has biased composition (polar residues). Residues 876–885 (RPEETVSSRR) show a composition bias toward basic and acidic residues.

In terms of assembly, homooligomer. Interacts with NEK8. Central component of a complex containing at least ANKS6, INVS, NEK8 and NPHP3. ANKS6 may organize complex assembly by linking INVS and NPHP3 to NEK8 and INVS may target the complex to the proximal ciliary axoneme. Interacts (via SAM domain) with BICC1 (via KH domains) in an RNA-dependent manner. Interacts (via SAM domain) with ANKS3 (via SAM domain). Post-translationally, hydroxylated at Asn-129, most probably by HIF1AN. This hydroxylation results in decreased NEK8-binding. Widely expressed with moderate level in brain, skeletal muscle and testis. Expressed in renal tubules.

The protein localises to the cell projection. It is found in the cilium. The protein resides in the cytoplasm. Required for renal function. This chain is Ankyrin repeat and SAM domain-containing protein 6 (Anks6), found in Rattus norvegicus (Rat).